Reading from the N-terminus, the 677-residue chain is UPF0652 protein (677 aa).

A B box-type; atypical zinc finger spans residues 38-84 (ETPGMCCECTDQPAEVVCLQCQDELCTVCSTSLHRRGSRRSHIFKNK). Zn(2+) contacts are provided by C43, C46, C66, and H71. Residues 91 to 111 (YDELNKRDRQPPLHGKEDEKV) show a composition bias toward basic and acidic residues. Disordered regions lie at residues 91–142 (YDEL…NNNI) and 156–192 (LNPL…IDED). Residues 113–126 (NNNNNNNNTNNTNN) are compositionally biased toward low complexity. Over residues 163–178 (HTNQQRNGGGSNNHQI) the composition is skewed to polar residues.

This sequence belongs to the UPF0652 family.

This is UPF0652 protein from Dictyostelium discoideum (Social amoeba).